A 355-amino-acid polypeptide reads, in one-letter code: Dihydroorotate dehydrogenase (quinone) (355 aa).

FMN-binding positions include 68–72 and Thr-92; that span reads AGFDK. Lys-72 contributes to the substrate binding site. Residue 117 to 121 coordinates substrate; the sequence is NRMGF. Residues Asn-154 and Asn-190 each coordinate FMN. Asn-190 is a substrate binding site. The active-site Nucleophile is the Ser-193. A substrate-binding site is contributed by Asn-195. The FMN site is built by Lys-232 and Thr-260. Residue 261–262 participates in substrate binding; it reads NT. FMN-binding positions include Gly-286, Gly-315, and 336 to 337; that span reads YS.

This sequence belongs to the dihydroorotate dehydrogenase family. Type 2 subfamily. Monomer. The cofactor is FMN.

Its subcellular location is the cell membrane. It catalyses the reaction (S)-dihydroorotate + a quinone = orotate + a quinol. Its pathway is pyrimidine metabolism; UMP biosynthesis via de novo pathway; orotate from (S)-dihydroorotate (quinone route): step 1/1. Its function is as follows. Catalyzes the conversion of dihydroorotate to orotate with quinone as electron acceptor. This chain is Dihydroorotate dehydrogenase (quinone), found in Nocardioides sp. (strain ATCC BAA-499 / JS614).